A 294-amino-acid polypeptide reads, in one-letter code: NAD kinase (294 aa).

Asp74 (proton acceptor) is an active-site residue. Residues 74–75, 148–149, Arg159, Arg176, Asp178, 189–194, and Gln247 each bind NAD(+); these read DG, ND, and TAYALS.

It belongs to the NAD kinase family. A divalent metal cation serves as cofactor.

Its subcellular location is the cytoplasm. The enzyme catalyses NAD(+) + ATP = ADP + NADP(+) + H(+). Functionally, involved in the regulation of the intracellular balance of NAD and NADP, and is a key enzyme in the biosynthesis of NADP. Catalyzes specifically the phosphorylation on 2'-hydroxyl of the adenosine moiety of NAD to yield NADP. The sequence is that of NAD kinase from Azoarcus sp. (strain BH72).